A 381-amino-acid chain; its full sequence is GDP-mannose-dependent alpha-(1-6)-phosphatidylinositol dimannoside mannosyltransferase (381 aa).

Residues glycine 16, arginine 207, 211-212 (EK), 283-287 (ETFGL), and glutamate 291 contribute to the substrate site.

Belongs to the glycosyltransferase group 1 family. Glycosyltransferase 4 subfamily.

Its pathway is phospholipid metabolism; phosphatidylinositol metabolism. Its function is as follows. Catalyzes the addition of a mannose residue from GDP-D-mannose to the position 6 of the alpha-1,6-linked mannose residue of the triacyl phosphatidylinositol dimannoside (Ac3PIM2) to generate triacyl phosphatidylinositol trimannoside (Ac3PIM3). The polypeptide is GDP-mannose-dependent alpha-(1-6)-phosphatidylinositol dimannoside mannosyltransferase (pimC) (Mycobacterium tuberculosis (strain ATCC 25177 / H37Ra)).